The following is a 248-amino-acid chain: 2,3-bisphosphoglycerate-dependent phosphoglycerate mutase (248 aa).

Substrate-binding positions include 8–15, 21–22, arginine 60, 87–90, lysine 98, 114–115, and 183–184; these read RHGESTWN, TG, ERHY, RR, and GN. Catalysis depends on histidine 9, which acts as the Tele-phosphohistidine intermediate. Glutamate 87 functions as the Proton donor/acceptor in the catalytic mechanism.

The protein belongs to the phosphoglycerate mutase family. BPG-dependent PGAM subfamily. Homodimer.

It catalyses the reaction (2R)-2-phosphoglycerate = (2R)-3-phosphoglycerate. It functions in the pathway carbohydrate degradation; glycolysis; pyruvate from D-glyceraldehyde 3-phosphate: step 3/5. Functionally, catalyzes the interconversion of 2-phosphoglycerate and 3-phosphoglycerate. The chain is 2,3-bisphosphoglycerate-dependent phosphoglycerate mutase from Ralstonia nicotianae (strain ATCC BAA-1114 / GMI1000) (Ralstonia solanacearum).